The chain runs to 304 residues: Phospholipase A1 (304 aa).

C6 and C90 form a disulfide bridge. N61 carries N-linked (GlcNAc...) asparagine glycosylation. S140 acts as the Nucleophile in catalysis. D168 acts as the Charge relay system in catalysis. Cystine bridges form between C179–C184 and C222–C231. The Charge relay system role is filled by H233. 3 cysteine pairs are disulfide-bonded: C248–C272, C249–C297, and C265–C270.

Belongs to the AB hydrolase superfamily. Lipase family. As to expression, expressed by the venom gland.

It is found in the secreted. The catalysed reaction is a 1,2-diacyl-sn-glycero-3-phosphocholine + H2O = a 2-acyl-sn-glycero-3-phosphocholine + a fatty acid + H(+). Its function is as follows. Catalyzes the hydrolysis of phosphatidylcholine with phospholipase A1 activity. May act as an allergen and induce hemolytic activity. This Vespa velutina (Asian yellow-legged hornet) protein is Phospholipase A1.